The chain runs to 598 residues: Acetylcholine receptor subunit alpha-type acr-5 (598 aa).

An N-terminal signal peptide occupies residues 1-16; that stretch reads MLPNIILILLIRYCSC. Residues 17–323 lie on the Extracellular side of the membrane; it reads GAGSRVYEKY…HLVIRRKPLY (307 aa). N-linked (GlcNAc...) asparagine glycosylation is found at N54, N71, N77, N134, N178, and N252. The chain crosses the membrane as a helical span at residues 324–344; it reads YMINLVVPTSIITIVAVTGFF. Residues 345–356 lie on the Cytoplasmic side of the membrane; sequence TPTSSSSERDEK. A helical transmembrane segment spans residues 357–377; that stretch reads LYLGINTLLTMSVMMLMVCNQ. The Extracellular portion of the chain corresponds to 378 to 391; the sequence is MPSTSTYVPLMSWY. A helical transmembrane segment spans residues 392–412; sequence YIGIIMVIVVGTFLATGVLAI. At 413–563 the chain is on the cytoplasmic side; that stretch reads HGQKHYNKPI…WEFLANVLDR (151 aa). A helical membrane pass occupies residues 564–584; sequence ILLTIFCGFTFAVFIILIGFD. The Extracellular portion of the chain corresponds to 585 to 598; the sequence is SFFTFHTDSPPKTM.

The protein belongs to the ligand-gated ion channel (TC 1.A.9) family. Acetylcholine receptor (TC 1.A.9.1) subfamily.

It is found in the postsynaptic cell membrane. It localises to the cell membrane. Functionally, subunit of nicotinic acetylcholine receptor (nAChR). Involved in nAChR sensitivity to nicotine. Modulates locomotion towards the drug nicotine. This is Acetylcholine receptor subunit alpha-type acr-5 from Caenorhabditis elegans.